A 304-amino-acid polypeptide reads, in one-letter code: ADP-polyphosphate phosphotransferase (304 aa).

It belongs to the polyphosphate kinase 2 (PPK2) family. Class I subfamily.

It carries out the reaction [phosphate](n) + ATP = [phosphate](n+1) + ADP. Its function is as follows. Uses inorganic polyphosphate (polyP) as a donor to convert ADP to ATP. The polypeptide is ADP-polyphosphate phosphotransferase (Pseudomonas aeruginosa (strain ATCC 15692 / DSM 22644 / CIP 104116 / JCM 14847 / LMG 12228 / 1C / PRS 101 / PAO1)).